Reading from the N-terminus, the 504-residue chain is Maturase K (504 aa).

This sequence belongs to the intron maturase 2 family. MatK subfamily.

It localises to the plastid. The protein localises to the chloroplast. Functionally, usually encoded in the trnK tRNA gene intron. Probably assists in splicing its own and other chloroplast group II introns. The protein is Maturase K of Chimaphila umbellata (Pipsissewa).